A 141-amino-acid chain; its full sequence is Nucleoside diphosphate kinase (141 aa).

Residues Lys11, Phe59, Arg87, Thr93, Arg104, and Asn114 each coordinate ATP. His117 serves as the catalytic Pros-phosphohistidine intermediate.

It belongs to the NDK family. In terms of assembly, homotetramer. The cofactor is Mg(2+).

The protein resides in the cytoplasm. It catalyses the reaction a 2'-deoxyribonucleoside 5'-diphosphate + ATP = a 2'-deoxyribonucleoside 5'-triphosphate + ADP. The enzyme catalyses a ribonucleoside 5'-diphosphate + ATP = a ribonucleoside 5'-triphosphate + ADP. Functionally, major role in the synthesis of nucleoside triphosphates other than ATP. The ATP gamma phosphate is transferred to the NDP beta phosphate via a ping-pong mechanism, using a phosphorylated active-site intermediate. This chain is Nucleoside diphosphate kinase, found in Cupriavidus necator (strain ATCC 17699 / DSM 428 / KCTC 22496 / NCIMB 10442 / H16 / Stanier 337) (Ralstonia eutropha).